Consider the following 247-residue polypeptide: Complement C1q subcomponent subunit B (247 aa).

An N-terminal signal peptide occupies residues 1-22 (MKTPRGSVLVLLLLNLLRVSWA). A Pyrrolidone carboxylic acid modification is found at Q23. 5 positions are modified to 4-hydroxyproline: P29, P32, P35, P47, and P50. Residues 30 to 78 (SIPGIPGIPGKPGSDGKPGTPGTKGEKGLPGLVSHLNENGEKGDPGFPG) form a disordered region. The Collagen-like domain maps to 39–98 (GKPGSDGKPGTPGTKGEKGLPGLVSHLNENGEKGDPGFPGMPGKVGPKGPIGPKGVPGPP). The segment covering 40-52 (KPGSDGKPGTPGT) has biased composition (low complexity). K53 and K56 each carry 5-hydroxylysine. P59 carries the post-translational modification 4-hydroxyproline. K71 bears the 5-hydroxylysine mark. P77 and P80 each carry 4-hydroxyproline. 5-hydroxylysine occurs at positions 86 and 92. 4-hydroxyproline is present on residues P95 and P98. Residue K104 is modified to 5-hydroxylysine. One can recognise a C1q domain in the interval 111–247 (KATQKIAFSA…GFMLFPDTEA (137 aa)). An intrachain disulfide couples C175 to C192. Positions 193, 194, and 200 each coordinate Ca(2+).

As to quaternary structure, core component of the complement C1 complex, a calcium-dependent complex composed of 1 molecule of the C1Q subcomplex, 2 molecules of C1R and 2 molecules of C1S. The C1Q subcomplex is composed 18 subunits: 3 chains of C1QA, C1QB, and C1QC trimerize to form 6 collagen-like triple helices connected to six globular ligand-recognition modules (C1q domain). In terms of processing, hydroxylated on lysine and proline residues. Hydroxylated lysine residues can be glycosylated. Bovine C1Q contains up to 66.3 hydroxylysine-galactosylglucose residues. Total percentage hydroxylysine residues glycosylated is 92.0%. Contains no hydroxylysine-monosaccharides.

Its subcellular location is the secreted. The protein resides in the cell surface. With respect to regulation, the C1Q subcomplex is inhibited by sulfated molecules, such as triterpenoid sulfates, heparan sulfate, or chondroitin sulfates. In terms of biological role, core component of the complement C1 complex, a multiprotein complex that initiates the classical pathway of the complement system, a cascade of proteins that leads to phagocytosis and breakdown of pathogens and signaling that strengthens the adaptive immune system. The classical complement pathway is initiated by the C1Q subcomplex of the C1 complex, which specifically binds IgG or IgM immunoglobulins complexed with antigens, forming antigen-antibody complexes on the surface of pathogens: C1QA, together with C1QB and C1QC, specifically recognizes and binds the Fc regions of IgG or IgM via its C1q domain. Immunoglobulin-binding activates the proenzyme C1R, which cleaves C1S, initiating the proteolytic cascade of the complement system. The C1Q subcomplex is activated by a hexamer of IgG complexed with antigens, while it is activated by a pentameric IgM. The C1Q subcomplex also recognizes and binds phosphatidylserine exposed on the surface of cells undergoing programmed cell death, possibly promoting activation of the complement system. In Bos taurus (Bovine), this protein is Complement C1q subcomponent subunit B (C1QB).